The primary structure comprises 243 residues: Probable transcriptional regulatory protein BPP2422 (243 aa).

Residues 1-21 (MAGHSKWANIQHRKGRQDAKR) are disordered.

Belongs to the TACO1 family.

The protein localises to the cytoplasm. The protein is Probable transcriptional regulatory protein BPP2422 of Bordetella parapertussis (strain 12822 / ATCC BAA-587 / NCTC 13253).